The following is a 306-amino-acid chain: Arylesterase (306 aa).

The Involved in the stabilization of the negatively charged intermediate by the formation of the oxyanion hole signature appears at 82-84; it reads HGG. Residues Ser-156, Asp-251, and His-281 contribute to the active site.

Monomer.

It carries out the reaction a phenyl acetate + H2O = a phenol + acetate + H(+). The enzyme catalyses An aryl dialkyl phosphate + H2O = dialkyl phosphate + an aryl alcohol.. Its activity is regulated as follows. Completely inhibited by chemical modifiers that are specific to Cys (HgCl(2) and p-chloromercuribenzoic acid), His (diethyl pyrocarbonate) and Ser (diisopropyl fluorophosphate and phenylmethanesulfonyl fluoride). No significant effect with chemical modifiers specific to Lys (pyridoxal 5'-phosphate) and Arg (phenylglyoxal). Not inhibited by inhibitors of A-esterases (paraoxon) or C-esterases (physostigmine/eserine). Activity is also not effected by incubation with 5 mM divalent cations for 30 minutes at 30 degrees Celsius or with 10 mM EDTA for 60 minutes at 75 degrees Celsius. Has a broad substrate specificity. Hydrolyzes various p-nitrophenyl phosphates, aromatic esters and p-nitrophenyl fatty acids in vitro. Most active against paraoxon, phenyl acetate and p-nitrophenyl caproate (C6), respectively. Also has tributyrinase activity, but shows no hydrolytic activity toward other triacylglycerols including tricaprylin, trimyristin, tripalmitin or triolein in vitro. The protein is Arylesterase of Saccharolobus solfataricus (Sulfolobus solfataricus).